Consider the following 438-residue polypeptide: UDP-N-acetylmuramoylalanine--D-glutamate ligase (438 aa).

112-118 (GSNGKST) is a binding site for ATP.

It belongs to the MurCDEF family.

The protein resides in the cytoplasm. The enzyme catalyses UDP-N-acetyl-alpha-D-muramoyl-L-alanine + D-glutamate + ATP = UDP-N-acetyl-alpha-D-muramoyl-L-alanyl-D-glutamate + ADP + phosphate + H(+). It participates in cell wall biogenesis; peptidoglycan biosynthesis. Its function is as follows. Cell wall formation. Catalyzes the addition of glutamate to the nucleotide precursor UDP-N-acetylmuramoyl-L-alanine (UMA). This chain is UDP-N-acetylmuramoylalanine--D-glutamate ligase, found in Salmonella paratyphi A (strain ATCC 9150 / SARB42).